The sequence spans 102 residues: UV-induced protein uvi31 (102 aa).

It belongs to the BolA/IbaG family.

Its subcellular location is the mitochondrion matrix. It is found in the cytoplasm. It localises to the nucleus. In terms of biological role, acts as a mitochondrial iron-sulfur (Fe-S) cluster assembly factor that facilitates [4Fe-4S] cluster insertion into a subset of mitochondrial proteins such as lipoyl synthase (LS) and succinate dehydrogenase (SDH). Required during the last step of iron-sulfur protein assembly when the iron-sulfur cluster is inserted into the target protein. Probably acts together with the monothiol glutaredoxin grx5. Not required for [2Fe-2S] cluster insertion into mitochondrial proteins. May be involved in control of cell division, especially during the resumption from cell cycle arrest. The chain is UV-induced protein uvi31 from Schizosaccharomyces pombe (strain 972 / ATCC 24843) (Fission yeast).